The sequence spans 486 residues: NADH-quinone oxidoreductase subunit N (486 aa).

14 helical membrane-spanning segments follow: residues 8–28 (LTAL…ILSI), 36–56 (FVAV…YFLI), 74–94 (ILYI…SYPW), 104–124 (EFYL…ISHH), 125–145 (MASF…LIAY), 160–180 (IILS…VYSI), 201–221 (ILVV…KLSI), 239–259 (VLSF…LNFL), 269–289 (VIYF…NLMA), 298–318 (FLGY…LVSH), 329–349 (AIYL…VNLI), 376–396 (SVLT…GFIG), 410–432 (WLIG…RIIL), and 459–479 (IVIC…NPLI).

Belongs to the complex I subunit 2 family. NDH-1 is composed of 13 different subunits. Subunits NuoA, H, J, K, L, M, N constitute the membrane sector of the complex.

The protein resides in the cell membrane. The enzyme catalyses a quinone + NADH + 5 H(+)(in) = a quinol + NAD(+) + 4 H(+)(out). In terms of biological role, NDH-1 shuttles electrons from NADH, via FMN and iron-sulfur (Fe-S) centers, to quinones in the respiratory chain. The immediate electron acceptor for the enzyme in this species is believed to be ubiquinone. Couples the redox reaction to proton translocation (for every two electrons transferred, four hydrogen ions are translocated across the cytoplasmic membrane), and thus conserves the redox energy in a proton gradient. This is NADH-quinone oxidoreductase subunit N from Buchnera aphidicola subsp. Acyrthosiphon pisum (strain APS) (Acyrthosiphon pisum symbiotic bacterium).